We begin with the raw amino-acid sequence, 84 residues long: Large ribosomal subunit protein bL27 (84 aa).

The tract at residues 1–22 is disordered; sequence MAHKKAGGSTRNGRDSESKRLG.

It belongs to the bacterial ribosomal protein bL27 family.

This Shewanella frigidimarina (strain NCIMB 400) protein is Large ribosomal subunit protein bL27.